The following is a 235-amino-acid chain: Small capsomere-interacting protein (235 aa).

The interval 104 to 235 is disordered; it reads PRIIRPQPPN…SGNASRSRRV (132 aa). Residues 127–139 show a composition bias toward polar residues; that stretch reads PQKTQSADQSALQ. The span at 158–188 shows a compositional bias: low complexity; the sequence is TTSASVGQQQHVVSGSSGQQPQQGAQSSTVQ. The segment covering 220–235 has biased composition (polar residues); sequence LSHTGQSGNASRSRRV.

This sequence belongs to the herpesviridae small capsomere-interacting protein family. Interacts with the major capsid protein/MCP.

Its subcellular location is the virion. The protein resides in the host nucleus. Participates in the assembly of the infectious particles by decorating the outer surface of the capsid shell and thus forming a layer between the capsid and the tegument. Complexes composed of the capsid protein VP5 and VP26 assemble together in the host cytoplasm and are translocated to the nucleus, where they accumulate and participate in capsid assembly. In terms of biological role, participates in the assembly of the infectious particles by decorating the outer surface of the capsid shell and thus forming a layer between the capsid and the tegument. Complexes composed of the major capsid protein and small capsomere-interacting protein/SCP assemble together in the host cytoplasm and are translocated to the nucleus, where they accumulate and participate in capsid assembly. The polypeptide is Small capsomere-interacting protein (Homo sapiens (Human)).